A 648-amino-acid polypeptide reads, in one-letter code: MFALDSIVGKHINYALDKTQHLPNKINNSITNTEITLQDYQYFASRIFIGLKNLNSMLLFWDTGTGKTLTAVYIIKYIKELFPRWIILIFIKKSLYIDPWLNTISSYISDTSNIKFIYYDSTSSLDKKFNNIYRSIESSLNKKNRLLIIIDEVHKLISRSVKKDNNERNFTPIYRKLIKLANYENNKILCMSATPITNNIAEFNNLIGLLRPNVMNIKEEYINNGKLINFKEVRETLLGICSYKRLIEADSLTDTNYIDGYAKKSIFYHNIIMSDEQSKLYNMAERYDYKTELGGLKTMRRLISSFAFYDLKIKGDLDNVEYNEMIKRKLAEFSEFTKNINFSKAFINAFKNNEIKSKTDLLITDINNYNILYQYSCKYIEACRIILNSRGKVLLFEPLVNFEGISSLKYYFNCFNISYIEYSSKTIKMRDNDLNEYNNYENNDGNKIKVCIFSYAGSEGISFKCINDIIILDMPWNESELKQIIGRSIRLNSHEYLPINYRYVNVHFIISYSNNRKSVDKEMLDIIKNKQGKINVVFDLLKASSIETIHNMHKYIEPVDNEIIFEIIRKTRMKEMNISNVIINLKLYPITYCKDYDRATILKGFLNKDTNIIYDNDTPVAKLIVDNNNLPIFVIENDILIYITNDYY.

Residues 48–213 (FIGLKNLNSM…NNLIGLLRPN (166 aa)) enclose the Helicase ATP-binding domain. 61 to 68 (WDTGTGKT) contributes to the ATP binding site. The short motif at 151-154 (DEVH) is the DEXH box element. The 164-residue stretch at 379–542 (YIEACRIILN…KINVVFDLLK (164 aa)) folds into the Helicase C-terminal domain. Residues 468-534 (DIIILDMPWN…DIIKNKQGKI (67 aa)) are binding to the cap-specific mRNA (nucleoside-2'-O-)-methyltransferase.

This sequence belongs to the helicase family. NPH I subfamily. In terms of assembly, monomer. Interacts (via C-terminus) with RAP94 (via N-terminus). Interacts with the cap-specific mRNA (nucleoside-2'-O-)-methyltransferase.

It is found in the virion. The catalysed reaction is a ribonucleoside 5'-triphosphate + H2O = a ribonucleoside 5'-diphosphate + phosphate + H(+). Its function is as follows. DNA-dependent ATPase required for providing the needed energy to achieve the termination of early transcripts. Acts in concert with the RAP94 subunit of the virion RNA polymerase and the capping enzyme/VTF to catalyze release of UUUUUNU-containing nascent RNA from the elongation complex. NPH-I must bind ssDNA in order to exhibit ATPase activity. The protein is Nucleoside triphosphatase I (NPH1) of Choristoneura fumiferana (Spruce budworm moth).